The sequence spans 178 residues: Protein GrpE (178 aa).

This sequence belongs to the GrpE family. Homodimer.

Its subcellular location is the cytoplasm. In terms of biological role, participates actively in the response to hyperosmotic and heat shock by preventing the aggregation of stress-denatured proteins, in association with DnaK and GrpE. It is the nucleotide exchange factor for DnaK and may function as a thermosensor. Unfolded proteins bind initially to DnaJ; upon interaction with the DnaJ-bound protein, DnaK hydrolyzes its bound ATP, resulting in the formation of a stable complex. GrpE releases ADP from DnaK; ATP binding to DnaK triggers the release of the substrate protein, thus completing the reaction cycle. Several rounds of ATP-dependent interactions between DnaJ, DnaK and GrpE are required for fully efficient folding. The polypeptide is Protein GrpE (Rickettsia typhi (strain ATCC VR-144 / Wilmington)).